The following is a 446-amino-acid chain: Exodeoxyribonuclease 7 large subunit (446 aa).

Belongs to the XseA family. In terms of assembly, heterooligomer composed of large and small subunits.

The protein localises to the cytoplasm. The catalysed reaction is Exonucleolytic cleavage in either 5'- to 3'- or 3'- to 5'-direction to yield nucleoside 5'-phosphates.. In terms of biological role, bidirectionally degrades single-stranded DNA into large acid-insoluble oligonucleotides, which are then degraded further into small acid-soluble oligonucleotides. This Geotalea uraniireducens (strain Rf4) (Geobacter uraniireducens) protein is Exodeoxyribonuclease 7 large subunit.